A 148-amino-acid chain; its full sequence is uncharacterized protein (148 aa).

Positions 97 to 112 are enriched in basic and acidic residues; that stretch reads KKLDEQRMPGKPKNTE. The segment at 97–126 is disordered; it reads KKLDEQRMPGKPKNTEGSKSTIRKKANVGN.

This is an uncharacterized protein from Caenorhabditis elegans.